The following is a 225-amino-acid chain: Small ribosomal subunit protein uS3 (225 aa).

One can recognise a KH type-2 domain in the interval 38–106; that stretch reads LRAFLRRKLS…DVALNIVEIR (69 aa).

Belongs to the universal ribosomal protein uS3 family. As to quaternary structure, part of the 30S ribosomal subunit. Forms a tight complex with proteins S10 and S14.

Binds the lower part of the 30S subunit head. Binds mRNA in the 70S ribosome, positioning it for translation. The protein is Small ribosomal subunit protein uS3 of Gluconobacter oxydans (strain 621H) (Gluconobacter suboxydans).